Reading from the N-terminus, the 152-residue chain is Histone H2B.1 (152 aa).

Positions 1-23 (MAPKAEKKPAEKKPAAGEEKSAE) are enriched in basic and acidic residues. The disordered stretch occupies residues 1 to 60 (MAPKAEKKPAEKKPAAGEEKSAEKAPAGKKPKAEKRLPASKASSKEGGAGDKKGRKKAKK). Residues lysine 7 and lysine 35 each carry the N6-acetyllysine modification. Residue lysine 148 forms a Glycyl lysine isopeptide (Lys-Gly) (interchain with G-Cter in ubiquitin) linkage.

The protein belongs to the histone H2B family. As to quaternary structure, the nucleosome is a histone octamer containing two molecules each of H2A, H2B, H3 and H4 assembled in one H3-H4 heterotetramer and two H2A-H2B heterodimers. The octamer wraps approximately 147 bp of DNA. In terms of processing, can be acetylated to form H2BK6ac and H2BK33ac. Post-translationally, monoubiquitinated by BRE1 to form H2BK143ub1 and deubiquitinated by UBP26. Required for heterochromatic histone H3 di- and trimethylation at H3K4me. May give a specific tag for epigenetic transcriptional activation.

The protein resides in the nucleus. It is found in the chromosome. Functionally, core component of nucleosome. Nucleosomes wrap and compact DNA into chromatin, limiting DNA accessibility to the cellular machineries which require DNA as a template. Histones thereby play a central role in transcription regulation, DNA repair, DNA replication and chromosomal stability. DNA accessibility is regulated via a complex set of post-translational modifications of histones, also called histone code, and nucleosome remodeling. The sequence is that of Histone H2B.1 from Oryza sativa subsp. indica (Rice).